A 571-amino-acid chain; its full sequence is Urease subunit alpha (571 aa).

The region spanning 133-571 (GGIDTHVHFI…LPLAQRYFLF (439 aa)) is the Urease domain. Ni(2+) contacts are provided by H138, H140, and K221. Residue K221 is modified to N6-carboxylysine. H223 serves as a coordination point for substrate. H250 and H276 together coordinate Ni(2+). Catalysis depends on H324, which acts as the Proton donor. D364 is a Ni(2+) binding site.

This sequence belongs to the metallo-dependent hydrolases superfamily. Urease alpha subunit family. As to quaternary structure, heterotrimer of UreA (gamma), UreB (beta) and UreC (alpha) subunits. Three heterotrimers associate to form the active enzyme. It depends on Ni cation as a cofactor. Post-translationally, carboxylation allows a single lysine to coordinate two nickel ions.

It is found in the cytoplasm. The enzyme catalyses urea + 2 H2O + H(+) = hydrogencarbonate + 2 NH4(+). The protein operates within nitrogen metabolism; urea degradation; CO(2) and NH(3) from urea (urease route): step 1/1. The chain is Urease subunit alpha from Staphylococcus carnosus (strain TM300).